Consider the following 197-residue polypeptide: Large ribosomal subunit protein uL10 (197 aa).

Positions arginine 162–lysine 197 are disordered. Positions aspartate 179 to alanine 188 are enriched in basic and acidic residues.

Belongs to the universal ribosomal protein uL10 family. In terms of assembly, part of the ribosomal stalk of the 50S ribosomal subunit. The N-terminus interacts with L11 and the large rRNA to form the base of the stalk. The C-terminus forms an elongated spine to which L12 dimers bind in a sequential fashion forming a multimeric L10(L12)X complex.

Functionally, forms part of the ribosomal stalk, playing a central role in the interaction of the ribosome with GTP-bound translation factors. The chain is Large ribosomal subunit protein uL10 from Oenococcus oeni (strain ATCC BAA-331 / PSU-1).